A 248-amino-acid polypeptide reads, in one-letter code: 4-hydroxy-tetrahydrodipicolinate reductase (248 aa).

Residues 9–14 (GARGKV), 77–79 (GTT), and 104–107 (APNF) each bind NAD(+). H134 acts as the Proton donor/acceptor in catalysis. H135 provides a ligand contact to (S)-2,3,4,5-tetrahydrodipicolinate. The active-site Proton donor is the K138. Residue 144–145 (GT) coordinates (S)-2,3,4,5-tetrahydrodipicolinate.

This sequence belongs to the DapB family.

Its subcellular location is the cytoplasm. It catalyses the reaction (S)-2,3,4,5-tetrahydrodipicolinate + NAD(+) + H2O = (2S,4S)-4-hydroxy-2,3,4,5-tetrahydrodipicolinate + NADH + H(+). It carries out the reaction (S)-2,3,4,5-tetrahydrodipicolinate + NADP(+) + H2O = (2S,4S)-4-hydroxy-2,3,4,5-tetrahydrodipicolinate + NADPH + H(+). It functions in the pathway amino-acid biosynthesis; L-lysine biosynthesis via DAP pathway; (S)-tetrahydrodipicolinate from L-aspartate: step 4/4. In terms of biological role, catalyzes the conversion of 4-hydroxy-tetrahydrodipicolinate (HTPA) to tetrahydrodipicolinate. The protein is 4-hydroxy-tetrahydrodipicolinate reductase of Nocardia farcinica (strain IFM 10152).